We begin with the raw amino-acid sequence, 138 residues long: uncharacterized protein (138 aa).

35-42 (DFIGSFYN) is a binding site for ATP.

This is an uncharacterized protein from Acanthamoeba polyphaga mimivirus (APMV).